A 233-amino-acid chain; its full sequence is tRNA pseudouridine synthase B (233 aa).

Residue Asp-48 is the Nucleophile of the active site.

This sequence belongs to the pseudouridine synthase TruB family. Type 1 subfamily.

It catalyses the reaction uridine(55) in tRNA = pseudouridine(55) in tRNA. In terms of biological role, responsible for synthesis of pseudouridine from uracil-55 in the psi GC loop of transfer RNAs. This chain is tRNA pseudouridine synthase B, found in Bacteroides fragilis (strain ATCC 25285 / DSM 2151 / CCUG 4856 / JCM 11019 / LMG 10263 / NCTC 9343 / Onslow / VPI 2553 / EN-2).